The sequence spans 87 residues: Small ribosomal subunit protein bS20 (87 aa).

A compositionally biased stretch (basic residues) spans 1 to 15 (MANHKSAAKRARQSI). The interval 1-29 (MANHKSAAKRARQSIRKTAVNNARKSTVK) is disordered. Positions 19–29 (AVNNARKSTVK) are enriched in polar residues.

Belongs to the bacterial ribosomal protein bS20 family.

Functionally, binds directly to 16S ribosomal RNA. This Bdellovibrio bacteriovorus (strain ATCC 15356 / DSM 50701 / NCIMB 9529 / HD100) protein is Small ribosomal subunit protein bS20.